A 118-amino-acid chain; its full sequence is Protein 5.3 (118 aa).

This Escherichia phage T7 (Bacteriophage T7) protein is Protein 5.3.